Here is a 214-residue protein sequence, read N- to C-terminus: NADH-quinone oxidoreductase subunit C (214 aa).

It belongs to the complex I 30 kDa subunit family. In terms of assembly, NDH-1 is composed of 14 different subunits. Subunits NuoB, C, D, E, F, and G constitute the peripheral sector of the complex.

It is found in the cell inner membrane. It catalyses the reaction a quinone + NADH + 5 H(+)(in) = a quinol + NAD(+) + 4 H(+)(out). Functionally, NDH-1 shuttles electrons from NADH, via FMN and iron-sulfur (Fe-S) centers, to quinones in the respiratory chain. The immediate electron acceptor for the enzyme in this species is believed to be ubiquinone. Couples the redox reaction to proton translocation (for every two electrons transferred, four hydrogen ions are translocated across the cytoplasmic membrane), and thus conserves the redox energy in a proton gradient. The polypeptide is NADH-quinone oxidoreductase subunit C (Francisella tularensis subsp. mediasiatica (strain FSC147)).